The chain runs to 269 residues: 4-hydroxy-tetrahydrodipicolinate reductase (269 aa).

11–16 provides a ligand contact to NAD(+); it reads GPIGRM. Lys-39 contacts NADP(+). NAD(+) is bound by residues 101–103 and 125–128; these read GTT and ASNF. His-158 (proton donor/acceptor) is an active-site residue. Residue His-159 coordinates (S)-2,3,4,5-tetrahydrodipicolinate. The Proton donor role is filled by Lys-162. (S)-2,3,4,5-tetrahydrodipicolinate is bound at residue 168 to 169; the sequence is GT.

It belongs to the DapB family. In terms of assembly, homotetramer.

Its subcellular location is the cytoplasm. The enzyme catalyses (S)-2,3,4,5-tetrahydrodipicolinate + NAD(+) + H2O = (2S,4S)-4-hydroxy-2,3,4,5-tetrahydrodipicolinate + NADH + H(+). It carries out the reaction (S)-2,3,4,5-tetrahydrodipicolinate + NADP(+) + H2O = (2S,4S)-4-hydroxy-2,3,4,5-tetrahydrodipicolinate + NADPH + H(+). Its pathway is amino-acid biosynthesis; L-lysine biosynthesis via DAP pathway; (S)-tetrahydrodipicolinate from L-aspartate: step 4/4. Its function is as follows. Catalyzes the conversion of 4-hydroxy-tetrahydrodipicolinate (HTPA) to tetrahydrodipicolinate. The chain is 4-hydroxy-tetrahydrodipicolinate reductase from Buchnera aphidicola subsp. Acyrthosiphon pisum (strain 5A).